The sequence spans 360 residues: BLOC-1-related complex subunit 6 (360 aa).

A compositionally biased stretch (basic and acidic residues) spans 1 to 10 (MEAARGRLGP). The segment at 1 to 201 (MEAARGRLGP…AGAGGGRRAT (201 aa)) is disordered. A compositionally biased stretch (polar residues) spans 23–35 (VTFSGRPSRTLSK). T41 is subject to Phosphothreonine. The segment covering 71 to 83 (HRPELDTWEDKPS) has biased composition (basic and acidic residues). A compositionally biased stretch (low complexity) spans 89–100 (SGARGSRGTSGS). A Phosphoserine modification is found at S130. Residues 144 to 156 (EGDDDDDGDDEEA) show a composition bias toward acidic residues. S173 bears the Phosphoserine mark. Positions 179–198 (GACGGGGSSSSGEAGAGGGR) are enriched in gly residues. Phosphothreonine is present on T201. Residue S204 is modified to Phosphoserine.

Belongs to the BORCS6 family. Component of the BLOC-one-related complex (BORC) which is composed of BLOC1S1, BLOC1S2, BORCS5, BORCS6, BORCS7, BORCS8, KXD1 and SNAPIN.

It localises to the lysosome membrane. Its function is as follows. As part of the BORC complex may play a role in lysosomes movement and localization at the cell periphery. Associated with the cytosolic face of lysosomes, the BORC complex may recruit ARL8B and couple lysosomes to microtubule plus-end-directed kinesin motor. The polypeptide is BLOC-1-related complex subunit 6 (Rattus norvegicus (Rat)).